Reading from the N-terminus, the 209-residue chain is Fibroblast growth factor 21 (209 aa).

Residues 1–28 (MDSDETGFEHSGLWVSVLAGLLLGACQA) form the signal peptide. The tract at residues 143-209 (PLHLPGNKSP…SQGRSPSYAS (67 aa)) is disordered. Positions 168 to 186 (PGLPPALPEPPGILAPQPP) are enriched in pro residues.

It belongs to the heparin-binding growth factors family. As to quaternary structure, interacts (via C-terminus) with KLB; this interaction is direct. Interacts with FGFR4.

The protein resides in the secreted. Functionally, stimulates glucose uptake in differentiated adipocytes via the induction of glucose transporter SLC2A1/GLUT1 expression (but not SLC2A4/GLUT4 expression). Activity requires the presence of KLB. Regulates systemic glucose homeostasis and insulin sensitivity. This Homo sapiens (Human) protein is Fibroblast growth factor 21 (FGF21).